The sequence spans 439 residues: 3-phosphoshikimate 1-carboxyvinyltransferase (439 aa).

Positions 27, 28, and 32 each coordinate 3-phosphoshikimate. Lysine 27 is a binding site for phosphoenolpyruvate. 2 residues coordinate phosphoenolpyruvate: glycine 101 and arginine 130. Serine 175, glutamine 177, aspartate 326, and lysine 353 together coordinate 3-phosphoshikimate. Phosphoenolpyruvate is bound at residue glutamine 177. Aspartate 326 serves as the catalytic Proton acceptor. 2 residues coordinate phosphoenolpyruvate: arginine 357 and arginine 399.

Belongs to the EPSP synthase family. Monomer.

It is found in the cytoplasm. The catalysed reaction is 3-phosphoshikimate + phosphoenolpyruvate = 5-O-(1-carboxyvinyl)-3-phosphoshikimate + phosphate. It functions in the pathway metabolic intermediate biosynthesis; chorismate biosynthesis; chorismate from D-erythrose 4-phosphate and phosphoenolpyruvate: step 6/7. Its function is as follows. Catalyzes the transfer of the enolpyruvyl moiety of phosphoenolpyruvate (PEP) to the 5-hydroxyl of shikimate-3-phosphate (S3P) to produce enolpyruvyl shikimate-3-phosphate and inorganic phosphate. The polypeptide is 3-phosphoshikimate 1-carboxyvinyltransferase (Synechococcus sp. (strain CC9311)).